The sequence spans 302 residues: Lipooligosaccharide biosynthesis protein lex-1 (302 aa).

7 tandem repeats follow at residues 42–45 (SINQ), 46–49 (SINQ), 50–53 (SINQ), 54–57 (SINQ), 58–61 (SINQ), 62–65 (SINQ), and 66–69 (SINQ). Residues 42–69 (SINQSINQSINQSINQSINQSINQSINQ) form a 7 X 4 AA tandem repeats of S-I-N-Q region.

The protein belongs to the glycosyltransferase 25 family.

Involved in extracellular lipooligosaccharide (LOS) biosynthesis and virulence expression. Involved in the synthesis of the oligosaccharide moiety of the LOS molecule by adding GalNAc. This chain is Lipooligosaccharide biosynthesis protein lex-1 (lex1), found in Haemophilus influenzae (strain ATCC 51907 / DSM 11121 / KW20 / Rd).